A 316-amino-acid chain; its full sequence is Pantothenate kinase (316 aa).

Position 95-102 (95-102 (GSVAVGKS)) interacts with ATP.

This sequence belongs to the prokaryotic pantothenate kinase family.

It is found in the cytoplasm. It catalyses the reaction (R)-pantothenate + ATP = (R)-4'-phosphopantothenate + ADP + H(+). The protein operates within cofactor biosynthesis; coenzyme A biosynthesis; CoA from (R)-pantothenate: step 1/5. The protein is Pantothenate kinase of Shigella sonnei (strain Ss046).